Consider the following 173-residue polypeptide: UPF0398 protein SMU_470 (173 aa).

It belongs to the UPF0398 family.

This is UPF0398 protein SMU_470 from Streptococcus mutans serotype c (strain ATCC 700610 / UA159).